The sequence spans 163 residues: Meiotically up-regulated gene 109 protein (163 aa).

A run of 4 helical transmembrane segments spans residues 61–78 (YRFY…FFIW), 82–104 (ALLA…SLTI), 114–134 (YSIP…APVG), and 136–156 (LFWS…LTTY).

It is found in the membrane. Functionally, has a role in meiosis. The chain is Meiotically up-regulated gene 109 protein (mug109) from Schizosaccharomyces pombe (strain 972 / ATCC 24843) (Fission yeast).